Here is a 404-residue protein sequence, read N- to C-terminus: GTPase Obg (404 aa).

One can recognise an Obg domain in the interval 1–159; sequence MKFIDEARIE…RALRLELKVL (159 aa). The interval 22–43 is disordered; it reads SFRREKFIPRGGPDGGDGGRGG. Residues 33–43 show a composition bias toward gly residues; it reads GPDGGDGGRGG. An OBG-type G domain is found at 160 to 334; the sequence is ADVGLLGMPN…LVFAIQDFLD (175 aa). Residues 166–173, 191–195, 213–216, 284–287, and 315–317 each bind GTP; these read GMPNAGKS, FTTLA, DIPG, NKLD, and SAL. The Mg(2+) site is built by Ser-173 and Thr-193. The segment at 373–404 is disordered; it reads LLAEGETGTGDDGRDGNENDPADEQDTNRPNH.

It belongs to the TRAFAC class OBG-HflX-like GTPase superfamily. OBG GTPase family. Monomer. Mg(2+) serves as cofactor.

Its subcellular location is the cytoplasm. Functionally, an essential GTPase which binds GTP, GDP and possibly (p)ppGpp with moderate affinity, with high nucleotide exchange rates and a fairly low GTP hydrolysis rate. Plays a role in control of the cell cycle, stress response, ribosome biogenesis and in those bacteria that undergo differentiation, in morphogenesis control. In Aromatoleum aromaticum (strain DSM 19018 / LMG 30748 / EbN1) (Azoarcus sp. (strain EbN1)), this protein is GTPase Obg.